The primary structure comprises 339 residues: Ribosomal RNA small subunit methyltransferase C (339 aa).

Belongs to the methyltransferase superfamily. RsmC family. In terms of assembly, monomer.

The protein localises to the cytoplasm. The enzyme catalyses guanosine(1207) in 16S rRNA + S-adenosyl-L-methionine = N(2)-methylguanosine(1207) in 16S rRNA + S-adenosyl-L-homocysteine + H(+). In terms of biological role, specifically methylates the guanine in position 1207 of 16S rRNA in the 30S particle. The polypeptide is Ribosomal RNA small subunit methyltransferase C (Aliivibrio salmonicida (strain LFI1238) (Vibrio salmonicida (strain LFI1238))).